A 178-amino-acid chain; its full sequence is Alkyl hydroperoxide reductase AhpD (178 aa).

Cysteine 131 serves as the catalytic Proton donor. An intrachain disulfide couples cysteine 131 to cysteine 134. Cysteine 134 functions as the Cysteine sulfenic acid (-SOH) intermediate in the catalytic mechanism.

The protein belongs to the AhpD family.

It carries out the reaction N(6)-[(R)-dihydrolipoyl]-L-lysyl-[lipoyl-carrier protein] + a hydroperoxide = N(6)-[(R)-lipoyl]-L-lysyl-[lipoyl-carrier protein] + an alcohol + H2O. In terms of biological role, antioxidant protein with alkyl hydroperoxidase activity. Required for the reduction of the AhpC active site cysteine residues and for the regeneration of the AhpC enzyme activity. This is Alkyl hydroperoxide reductase AhpD from Methylocella silvestris (strain DSM 15510 / CIP 108128 / LMG 27833 / NCIMB 13906 / BL2).